We begin with the raw amino-acid sequence, 225 residues long: Uridylate kinase (225 aa).

Residue 9-10 coordinates ATP; that stretch reads GS. Gly-46 is a binding site for UMP. Positions 47 and 51 each coordinate ATP. UMP is bound by residues Asp-67 and 115 to 121; that span reads THPAHTT. ATP is bound by residues Thr-141, Asn-142, Tyr-147, and Asp-150.

It belongs to the UMP kinase family. As to quaternary structure, homohexamer.

It localises to the cytoplasm. It catalyses the reaction UMP + ATP = UDP + ADP. Its pathway is pyrimidine metabolism; CTP biosynthesis via de novo pathway; UDP from UMP (UMPK route): step 1/1. With respect to regulation, inhibited by UTP. Its function is as follows. Catalyzes the reversible phosphorylation of UMP to UDP. This Methanococcus maripaludis (strain C6 / ATCC BAA-1332) protein is Uridylate kinase.